We begin with the raw amino-acid sequence, 401 residues long: Type I restriction enzyme EcoprrI specificity subunit (401 aa).

This sequence belongs to the type-I restriction system S methylase family. As to quaternary structure, the type I restriction/modification system is composed of three polypeptides R, M and S; the restriction enzyme has stoichiometry R(2)M(2)S(1) while the methyltransferase is M(2)S(1).

Its function is as follows. The specificity (S) subunit of a type I restriction enzyme; this subunit dictates DNA sequence specificity. The M and S subunits together form a methyltransferase (MTase) that methylates two adenine residues of the sequence 5'-CCAN(7)ATGC-3'. In the presence of the R subunit the complex can also act as an endonuclease, binding to the same target sequence but cutting the DNA some distance from this site. Whether the DNA is cut or modified depends on the methylation state of the target sequence. When the target site is unmodified, the DNA is cut. When the target site is hemimethylated, the complex acts as a maintenance MTase modifying the DNA so that both strands become methylated. After locating a non-methylated recognition site, the enzyme complex serves as a molecular motor that translocates DNA in an ATP-dependent manner until a collision occurs that triggers cleavage. The protein is Type I restriction enzyme EcoprrI specificity subunit (prrB) of Escherichia coli.